Consider the following 683-residue polypeptide: Zinc finger protein 510 (683 aa).

The 72-residue stretch at 46-117 folds into the KRAB domain; it reads VSFKDVTIEF…EEEFSNQSHP (72 aa). Residues 254-276 form a C2H2-type 1; degenerate zinc finger; it reads FECNKIGKAFNDKANCVKHNSSH. 9 C2H2-type zinc fingers span residues 404 to 426, 432 to 454, 460 to 482, 488 to 510, 516 to 538, 544 to 566, 572 to 594, 600 to 622, and 628 to 650; these read YKCN…QRTH, FECS…QRIH, YKCN…QRIH, YECS…HRIH, FQCN…QRTH, YQCN…QKTH, and FKCN…QRIH.

It belongs to the krueppel C2H2-type zinc-finger protein family.

The protein localises to the nucleus. In terms of biological role, may be involved in transcriptional regulation. The sequence is that of Zinc finger protein 510 (ZNF510) from Homo sapiens (Human).